Consider the following 213-residue polypeptide: Holliday junction resolvase RecU (213 aa).

Mg(2+) is bound by residues threonine 99, aspartate 101, glutamate 114, and glutamine 133.

This sequence belongs to the RecU family. The cofactor is Mg(2+).

It localises to the cytoplasm. The catalysed reaction is Endonucleolytic cleavage at a junction such as a reciprocal single-stranded crossover between two homologous DNA duplexes (Holliday junction).. Its function is as follows. Endonuclease that resolves Holliday junction intermediates in genetic recombination. Cleaves mobile four-strand junctions by introducing symmetrical nicks in paired strands. Promotes annealing of linear ssDNA with homologous dsDNA. Required for DNA repair, homologous recombination and chromosome segregation. The chain is Holliday junction resolvase RecU from Lactococcus lactis subsp. lactis (strain IL1403) (Streptococcus lactis).